A 136-amino-acid polypeptide reads, in one-letter code: Alpha-2-purothionin (136 aa).

The signal sequence occupies residues 1-27 (MGSKGLKGVMVCLLILGLVLEQVQVEG). Cystine bridges form between cysteine 30-cysteine 66, cysteine 31-cysteine 58, cysteine 39-cysteine 56, and cysteine 43-cysteine 52. A propeptide spans 73-136 (LALESNSDEP…GDAGLTSLDA (64 aa)) (acidic domain).

The protein belongs to the plant thionin (TC 1.C.44) family. 4 C-C subfamily.

Its subcellular location is the secreted. Its function is as follows. Thionins are small plant proteins which are toxic to animal cells. They seem to exert their toxic effect at the level of the cell membrane. Their precise function is not known. The sequence is that of Alpha-2-purothionin (THI1.2) from Triticum aestivum (Wheat).